Consider the following 64-residue polypeptide: Large ribosomal subunit protein bL32 (64 aa).

This sequence belongs to the bacterial ribosomal protein bL32 family.

The polypeptide is Large ribosomal subunit protein bL32 (Mycoplasma mobile (strain ATCC 43663 / 163K / NCTC 11711) (Mesomycoplasma mobile)).